Reading from the N-terminus, the 455-residue chain is Xylan O-acetyltransferase 3 (455 aa).

Low complexity predominate over residues 1–15; sequence MSKPQQQSPPSTTTT. Residues 1–32 form a disordered region; sequence MSKPQQQSPPSTTTTSPPPPPPSTPPPASSSR. At 1–42 the chain is on the cytoplasmic side; sequence MSKPQQQSPPSTTTTSPPPPPPSTPPPASSSRSLLSALRRSP. Positions 16 to 28 are enriched in pro residues; sequence SPPPPPPSTPPPA. The chain crosses the membrane as a helical; Signal-anchor for type II membrane protein span at residues 43–59; it reads VTTLVAAFFLLALFMYG. Residues 60–455 lie on the Lumenal side of the membrane; the sequence is EDVRTLAELS…PSTHPSLPPQ (396 aa). Asn-82, Asn-107, and Asn-146 each carry an N-linked (GlcNAc...) asparagine glycan. Disulfide bonds link Cys-96/Cys-147, Cys-118/Cys-183, Cys-127/Cys-423, and Cys-339/Cys-419. The GDS motif motif lies at 170 to 172; that stretch reads GDS. Ser-172 serves as the catalytic Nucleophile. N-linked (GlcNAc...) asparagine glycans are attached at residues Asn-278 and Asn-348. Asp-418 serves as the catalytic Proton donor. Positions 418–421 match the DXXH motif motif; sequence DCIH. His-421 serves as the catalytic Proton acceptor.

Belongs to the PC-esterase family. TBL subfamily. In terms of tissue distribution, highly expressed in leaves. Expressed in roots, stems and inflorescences.

Its subcellular location is the golgi apparatus membrane. In terms of biological role, xylan acetyltransferase required for 2-O- and 3-O-monoacetylation of xylosyl residues in xylan. Catalyzes the 2-O-acetylation of xylan, followed by nonenzymatic acetyl migration to the O-3 position, resulting in products that are monoacetylated at both O-2 and O-3 positions. The protein is Xylan O-acetyltransferase 3 of Oryza sativa subsp. japonica (Rice).